The chain runs to 296 residues: Splicing factor U2af small subunit A (296 aa).

A C3H1-type 1 zinc finger spans residues 12–40; that stretch reads EKDRVNCPFYFKIGACRHGDRCSRLHNRP. An RRM domain is found at 44–146; it reads PTLLLSNMYQ…RPIIADFSPV (103 aa). The C3H1-type 2 zinc-finger motif lies at 148 to 175; that stretch reads DFREATCRQYEENNCNRGGYCNFMHVKL. Residues 191-202 are compositionally biased toward basic residues; that stretch reads SYRRGSRSRSRS. The segment at 191 to 296 is disordered; sequence SYRRGSRSRS…EREEKEEGGA (106 aa). 2 stretches are compositionally biased toward basic and acidic residues: residues 209–254 and 272–296; these read NKRD…DGSR and EGSE…EGGA.

It belongs to the splicing factor SR family. As to quaternary structure, component of the spliceosome. Homo- and heterodimer. Interacts with U2AF35B, RNU1 and SR45.

It localises to the nucleus speckle. In terms of biological role, necessary for the splicing of pre-mRNA. Probably active at the 3' splice sites. This Arabidopsis thaliana (Mouse-ear cress) protein is Splicing factor U2af small subunit A.